The chain runs to 3146 residues: Bassianolide nonribosomal cyclodepsipeptide synthetase (3146 aa).

Polar residues predominate over residues 1 to 12; that stretch reads MEPPNNANTGQL. The disordered stretch occupies residues 1–23; the sequence is MEPPNNANTGQLGPTLPNGTVDL. A condensation 1 region spans residues 69–454; sequence HVVYEIPEDV…INKLQSTDGS (386 aa). Residues 495 to 887 form an adenylation 1 region; it reads GDTPNKPAVC…GRMDSQVKIR (393 aa). The Carrier 1 domain maps to 1015-1091; sequence PDASAGVTKL…SLQAAIGGSS (77 aa). An O-(pantetheine 4'-phosphoryl)serine modification is found at serine 1052. Residues 1109-1538 are condensation 2; that stretch reads SYSQGRLWFL…QTLISVVPLT (430 aa). Residues 1567–1973 are adenylation 2; that stretch reads FRTQVASYPD…GRMDFQFKIR (407 aa). Residues 2041–2181 form an S-adenosyl-L-methionine-dependent N-methyltransferase (MT) region; it reads TYTELDTVSS…FPTRDYLERV (141 aa). 2 consecutive Carrier domains span residues 2514–2588 and 2614–2688; these read FPLS…RQQL and APTT…EVSQ. Serine 2548 and serine 2648 each carry O-(pantetheine 4'-phosphoryl)serine. The segment at 2734–3138 is condensation 3; it reads QDVYLATHLQ…THLMEQVCNT (405 aa).

It belongs to the NRP synthetase family.

The enzyme catalyses 4 (R)-2-hydroxy-3-methylbutanoate + 4 L-leucine + 4 S-adenosyl-L-methionine + 8 ATP = bassianolide + 8 AMP + 4 S-adenosyl-L-homocysteine + 8 diphosphate + 8 H(+). Bassianolide nonribosomal synthetase that mediates the biosynthesis of bassianolide (BSL), a non-ribosomal cyclodepsipeptide that shows insecticidal and cancer cell antiproliferative activity. BSLS first catalyzes the iterative synthesis of an enzyme-bound dipeptidol monomer intermediate from D-2-hydroxyisovalerate and L-leucine before performing the condensation and cyclization of 4 dipeptidol monomers to yield the cyclic tetrameric ester bassianolide. The N-methyltransferase MT domain is responsible for the methylation of the leucine residues of bassianolide. BSLS is flexible with both the amino acid and hydroxyl acid precursors, and produces bassianolide as the major product (containing N-methyl-L-Leu), together with small amounts of beauvericin and its analogs beauvericins A-C (containing N-methyl-L-Phe). This is Bassianolide nonribosomal cyclodepsipeptide synthetase from Beauveria bassiana (White muscardine disease fungus).